A 349-amino-acid polypeptide reads, in one-letter code: MKQKYENYFKKRLILNLLIFLLLACSSESIFSQLGNLQKIKHEYNILGSSSPRGISLVGETLYIAAMHLFKKENGKIEKIDLSNSYEFINDIVNISGKTYLLAQNKEEELEVCELNGKDWTLKFKKPLKAYKFLKSVGRDGVKEAYILAIDKNNREKIFDLQGSDKTPPQATENDKFYQISNEENLITGNSLKIWQMNNNTYTNIDYQQAKEIMPIIKTSIRGSSEVLVMTGGYNNLDTKFKVYSNTNNYTTPIFIQDEVGEFSSYFAREFNDAILIGSNNGFAEFTKNKEGIFALRAPSKSVEPGAYNGSQLSKTGLNDIIPVSNNTIYILTQGKGLWKLENRKLTKE.

Positions Met-1–Ser-29 are cleaved as a signal peptide.

This is an uncharacterized protein from Borreliella burgdorferi (strain ATCC 35210 / DSM 4680 / CIP 102532 / B31) (Borrelia burgdorferi).